We begin with the raw amino-acid sequence, 72 residues long: DNA gyrase inhibitor YacG (72 aa).

Cys-17, Cys-20, Cys-32, and Cys-36 together coordinate Zn(2+). Positions 51 to 72 are disordered; the sequence is IPGPEEEEMSYPPRSDDENRSR.

It belongs to the DNA gyrase inhibitor YacG family. In terms of assembly, interacts with GyrB. Requires Zn(2+) as cofactor.

Inhibits all the catalytic activities of DNA gyrase by preventing its interaction with DNA. Acts by binding directly to the C-terminal domain of GyrB, which probably disrupts DNA binding by the gyrase. This Methylorubrum extorquens (strain PA1) (Methylobacterium extorquens) protein is DNA gyrase inhibitor YacG.